The chain runs to 365 residues: Aminomethyltransferase (365 aa).

This sequence belongs to the GcvT family. The glycine cleavage system is composed of four proteins: P, T, L and H.

The enzyme catalyses N(6)-[(R)-S(8)-aminomethyldihydrolipoyl]-L-lysyl-[protein] + (6S)-5,6,7,8-tetrahydrofolate = N(6)-[(R)-dihydrolipoyl]-L-lysyl-[protein] + (6R)-5,10-methylene-5,6,7,8-tetrahydrofolate + NH4(+). Its function is as follows. The glycine cleavage system catalyzes the degradation of glycine. The protein is Aminomethyltransferase of Chlorobium phaeobacteroides (strain DSM 266 / SMG 266 / 2430).